Reading from the N-terminus, the 211-residue chain is Peroxiredoxin (211 aa).

The region spanning 2–156 is the Thioredoxin domain; the sequence is PLLGDDFPEL…ILRAVKVLQI (155 aa). Cysteine 44 (cysteine sulfenic acid (-SOH) intermediate) is an active-site residue. Arginine 119 is a substrate binding site. An intrachain disulfide couples cysteine 199 to cysteine 205.

This sequence belongs to the peroxiredoxin family. Prx6 subfamily. As to quaternary structure, homodecamer. Pentamer of dimers that assemble into a ring structure.

Its subcellular location is the cytoplasm. It catalyses the reaction a hydroperoxide + [thioredoxin]-dithiol = an alcohol + [thioredoxin]-disulfide + H2O. Thiol-specific peroxidase that catalyzes the reduction of hydrogen peroxide and organic hydroperoxides to water and alcohols, respectively. Plays a role in cell protection against oxidative stress by detoxifying peroxides. The chain is Peroxiredoxin from Chlorobaculum tepidum (strain ATCC 49652 / DSM 12025 / NBRC 103806 / TLS) (Chlorobium tepidum).